The chain runs to 185 residues: UPF0149 protein PFL_5969 (185 aa).

Belongs to the UPF0149 family.

This is UPF0149 protein PFL_5969 from Pseudomonas fluorescens (strain ATCC BAA-477 / NRRL B-23932 / Pf-5).